We begin with the raw amino-acid sequence, 342 residues long: Flap endonuclease 1 (342 aa).

The interval 1–99 (MGVKIGELIE…RAIEERVRAR (99 aa)) is N-domain. Mg(2+) is bound by residues Asp-28, Asp-81, Glu-153, Glu-155, Asp-174, Asp-176, and Asp-237. The segment at 117–259 (EARKYAQAAL…RALELVKKYK (143 aa)) is I-domain.

The protein belongs to the XPG/RAD2 endonuclease family. FEN1 subfamily. Interacts with PCNA. PCNA stimulates the nuclease activity without altering cleavage specificity. It depends on Mg(2+) as a cofactor.

Functionally, structure-specific nuclease with 5'-flap endonuclease and 5'-3' exonuclease activities involved in DNA replication and repair. During DNA replication, cleaves the 5'-overhanging flap structure that is generated by displacement synthesis when DNA polymerase encounters the 5'-end of a downstream Okazaki fragment. Binds the unpaired 3'-DNA end and kinks the DNA to facilitate 5' cleavage specificity. Cleaves one nucleotide into the double-stranded DNA from the junction in flap DNA, leaving a nick for ligation. Also involved in the base excision repair (BER) pathway. Acts as a genome stabilization factor that prevents flaps from equilibrating into structures that lead to duplications and deletions. Also possesses 5'-3' exonuclease activity on nicked or gapped double-stranded DNA. The chain is Flap endonuclease 1 from Korarchaeum cryptofilum (strain OPF8).